Here is a 364-residue protein sequence, read N- to C-terminus: Chorismate synthase (364 aa).

NADP(+) is bound at residue Arg48. Residues 126 to 128 (RSS), Gly288, 303 to 307 (KPIAS), and Arg329 contribute to the FMN site.

The protein belongs to the chorismate synthase family. In terms of assembly, homotetramer. Requires FMNH2 as cofactor.

The catalysed reaction is 5-O-(1-carboxyvinyl)-3-phosphoshikimate = chorismate + phosphate. It participates in metabolic intermediate biosynthesis; chorismate biosynthesis; chorismate from D-erythrose 4-phosphate and phosphoenolpyruvate: step 7/7. Catalyzes the anti-1,4-elimination of the C-3 phosphate and the C-6 proR hydrogen from 5-enolpyruvylshikimate-3-phosphate (EPSP) to yield chorismate, which is the branch point compound that serves as the starting substrate for the three terminal pathways of aromatic amino acid biosynthesis. This reaction introduces a second double bond into the aromatic ring system. The protein is Chorismate synthase of Desulfovibrio desulfuricans (strain ATCC 27774 / DSM 6949 / MB).